Here is a 90-residue protein sequence, read N- to C-terminus: Spore coat protein F-like protein YgzC (90 aa).

Belongs to the CotF family.

The protein localises to the spore coat. In Bacillus subtilis (strain 168), this protein is Spore coat protein F-like protein YgzC (ygzC).